Consider the following 426-residue polypeptide: Glutamate-1-semialdehyde 2,1-aminomutase (426 aa).

The residue at position 265 (lysine 265) is an N6-(pyridoxal phosphate)lysine.

It belongs to the class-III pyridoxal-phosphate-dependent aminotransferase family. HemL subfamily. In terms of assembly, homodimer. Pyridoxal 5'-phosphate serves as cofactor.

Its subcellular location is the cytoplasm. The catalysed reaction is (S)-4-amino-5-oxopentanoate = 5-aminolevulinate. Its pathway is porphyrin-containing compound metabolism; protoporphyrin-IX biosynthesis; 5-aminolevulinate from L-glutamyl-tRNA(Glu): step 2/2. The sequence is that of Glutamate-1-semialdehyde 2,1-aminomutase from Hahella chejuensis (strain KCTC 2396).